The chain runs to 333 residues: Low specificity L-threonine aldolase (333 aa).

Lys-197 carries the post-translational modification N6-(pyridoxal phosphate)lysine.

The protein belongs to the threonine aldolase family. Homotetramer. Pyridoxal 5'-phosphate serves as cofactor.

The enzyme catalyses L-threonine = acetaldehyde + glycine. The catalysed reaction is L-allo-threonine = acetaldehyde + glycine. Its function is as follows. Catalyzes the cleavage of L-allo-threonine and L-threonine to glycine and acetaldehyde. L-threo-phenylserine and L-erythro-phenylserine are also good substrates. The protein is Low specificity L-threonine aldolase (ltaE) of Escherichia coli (strain K12).